A 257-amino-acid chain; its full sequence is Dof zinc finger protein DOF5.3 (257 aa).

The interval 23-50 (LSYSSNPTPLDNDQKKPSPATAVTRPQP) is disordered. Residues 24–33 (SYSSNPTPLD) are compositionally biased toward polar residues. Residues 55 to 109 (LRCPRCDSTNTKFCYYNNYSLTQPRYFCKSCRRYWTKGGTLRNIPVGGGCRKNKR) form a Dof-type zinc finger. The Zn(2+) site is built by cysteine 57, cysteine 60, cysteine 82, and cysteine 85. Positions 104 to 127 (CRKNKRSTSSAARSLRTTPEPASH) are disordered. Low complexity predominate over residues 110-121 (STSSAARSLRTT).

As to expression, the PEAR proteins (e.g. DOF2.4, DOF5.1, DOF3.2, DOF1.1, DOF5.6 and DOF5.3) form a short-range concentration gradient that peaks at protophloem sieve elements (PSE). Accumulates in the stele.

It localises to the nucleus. In terms of biological role, transcription factor that binds specifically to a 5'-AA[AG]G-3' consensus core sequence. The PEAR proteins (e.g. DOF2.4, DOF5.1, DOF3.2, DOF1.1, DOF5.6 and DOF5.3) activate gene expression that promotes radial growth of protophloem sieve elements. The polypeptide is Dof zinc finger protein DOF5.3 (Arabidopsis thaliana (Mouse-ear cress)).